Consider the following 45-residue polypeptide: Large ribosomal subunit protein bL36 (45 aa).

This sequence belongs to the bacterial ribosomal protein bL36 family.

This chain is Large ribosomal subunit protein bL36, found in Aliivibrio salmonicida (strain LFI1238) (Vibrio salmonicida (strain LFI1238)).